A 256-amino-acid polypeptide reads, in one-letter code: tRNA (guanine-N(7)-)-methyltransferase (256 aa).

The tract at residues 1–43 (MDVDPVNSEMELDNKPTCETVPGLPQKKHYRQRAHSNPHSDHD) is disordered. Positions 26-36 (QKKHYRQRAHS) are enriched in basic residues. Residues G74, 97–98 (EI), 132–133 (NA), and L152 contribute to the S-adenosyl-L-methionine site. The active site involves D155. 230-232 (TEE) provides a ligand contact to S-adenosyl-L-methionine.

The protein belongs to the class I-like SAM-binding methyltransferase superfamily. TrmB family.

The protein resides in the nucleus. The catalysed reaction is guanosine(46) in tRNA + S-adenosyl-L-methionine = N(7)-methylguanosine(46) in tRNA + S-adenosyl-L-homocysteine. It functions in the pathway tRNA modification; N(7)-methylguanine-tRNA biosynthesis. Its function is as follows. Catalyzes the formation of N(7)-methylguanine at position 46 (m7G46) in tRNA. In Caenorhabditis briggsae, this protein is tRNA (guanine-N(7)-)-methyltransferase.